The following is a 180-amino-acid chain: Prorelaxin (180 aa).

A signal peptide spans Met1–Ala25. Disulfide bonds link Cys33–Cys167, Cys45–Cys180, and Cys166–Cys171. A propeptide spans Ser53–Ile154 (connecting peptide).

It belongs to the insulin family. In terms of assembly, heterodimer of a B chain and an A chain linked by two disulfide bonds. Expressed by the placenta. Exclusively detected in cells located in the lamellar placental labyrinth and absent from other placental and non-placental uterine parts.

It localises to the secreted. In terms of biological role, relaxin is an ovarian hormone that acts with estrogen to produce dilatation of the birth canal in many mammals. This is Prorelaxin (RLN) from Felis catus (Cat).